The sequence spans 324 residues: NADH-quinone oxidoreductase subunit H (324 aa).

8 helical membrane-spanning segments follow: residues Ile11–Phe31, Val81–Val101, Ile114–Gly134, Val154–Phe174, Leu186–Val206, Phe237–Phe257, Ile264–Leu284, and Val304–Ala324.

Belongs to the complex I subunit 1 family. In terms of assembly, NDH-1 is composed of 13 different subunits. Subunits NuoA, H, J, K, L, M, N constitute the membrane sector of the complex.

The protein localises to the cell inner membrane. The catalysed reaction is a quinone + NADH + 5 H(+)(in) = a quinol + NAD(+) + 4 H(+)(out). Functionally, NDH-1 shuttles electrons from NADH, via FMN and iron-sulfur (Fe-S) centers, to quinones in the respiratory chain. The immediate electron acceptor for the enzyme in this species is believed to be ubiquinone. Couples the redox reaction to proton translocation (for every two electrons transferred, four hydrogen ions are translocated across the cytoplasmic membrane), and thus conserves the redox energy in a proton gradient. This subunit may bind ubiquinone. The sequence is that of NADH-quinone oxidoreductase subunit H from Pectobacterium carotovorum subsp. carotovorum (strain PC1).